The sequence spans 255 residues: Small ribosomal subunit protein eS4 (255 aa).

The S4 RNA-binding domain occupies 44–107; the sequence is IPLLILVRDV…DEYYRMIPYP (64 aa).

This sequence belongs to the eukaryotic ribosomal protein eS4 family.

This is Small ribosomal subunit protein eS4 from Ignicoccus hospitalis (strain KIN4/I / DSM 18386 / JCM 14125).